A 602-amino-acid polypeptide reads, in one-letter code: Cholinesterase (602 aa).

Residues 1–28 form the signal peptide; that stretch reads MQSRSTVIYIRFVLWFLLLWVLFEKSHT. 2 N-linked (GlcNAc...) asparagine glycosylation sites follow: N85 and N134. A substrate-binding site is contributed by 144–145; that stretch reads GS. Residue S226 is the Acyl-ester intermediate of the active site. Position 226 is a phosphoserine (S226). N-linked (GlcNAc...) asparagine glycosylation is found at N269 and N284. E353 (charge relay system) is an active-site residue. The N-linked (GlcNAc...) asparagine glycan is linked to N369. The active-site Charge relay system is H466. Residues N483, N509, N513, and N514 are each glycosylated (N-linked (GlcNAc...) asparagine).

It belongs to the type-B carboxylesterase/lipase family. Homotetramer; disulfide-linked. Dimer of dimers. In terms of tissue distribution, present in most cells except erythrocytes.

Its subcellular location is the secreted. It catalyses the reaction an acylcholine + H2O = a carboxylate + choline + H(+). In terms of biological role, esterase with broad substrate specificity. Contributes to the inactivation of the neurotransmitter acetylcholine. Can degrade neurotoxic organophosphate esters. This chain is Cholinesterase (BCHE), found in Bos taurus (Bovine).